The following is a 372-amino-acid chain: MRFERLAQDGQARRGRLSFPRGTVETPAFMPVGTYGTVKGMTPQSVKDIGAEIILGNTFHLWLRPGTEVIETHGDLHDFAQWDKPILTDSGGFQVFSLGDMRKITEEGVHFRSPVDGAKVFMGPEESMAVQRSLGSDIVMIFDECTPYPATEAEAKRSMEMSLRWAERSRIAHGDSPSALFGIIQGGMYPELRERSLKGLLDIGFDGLAIGGLSVGEPKEEMLKVLDYLPGWMPDDKPRYLMGVGKPEDLVEGVRRGVDMFDCVMPTRNARNGYLFTAEGTVKIRNAQHRYSTQALEADCDCHTCQHFSRSYLHHLDRCGEMLGAMLNTIHNLRYYQRVMAGLRTAIEAGTLTAFVEDFYARRGMPVPPLAA.

The active-site Proton acceptor is the D89. Substrate-binding positions include 89 to 93, D143, Q185, and G212; that span reads DSGGF. The RNA binding stretch occupies residues 243–249; the sequence is GVGKPED. D262 (nucleophile) is an active-site residue. Residues 267–271 form an RNA binding; important for wobble base 34 recognition region; sequence TRNAR. Zn(2+) is bound by residues C300, C302, C305, and H331.

This sequence belongs to the queuine tRNA-ribosyltransferase family. Homodimer. Within each dimer, one monomer is responsible for RNA recognition and catalysis, while the other monomer binds to the replacement base PreQ1. Zn(2+) is required as a cofactor.

It catalyses the reaction 7-aminomethyl-7-carbaguanine + guanosine(34) in tRNA = 7-aminomethyl-7-carbaguanosine(34) in tRNA + guanine. The protein operates within tRNA modification; tRNA-queuosine biosynthesis. Catalyzes the base-exchange of a guanine (G) residue with the queuine precursor 7-aminomethyl-7-deazaguanine (PreQ1) at position 34 (anticodon wobble position) in tRNAs with GU(N) anticodons (tRNA-Asp, -Asn, -His and -Tyr). Catalysis occurs through a double-displacement mechanism. The nucleophile active site attacks the C1' of nucleotide 34 to detach the guanine base from the RNA, forming a covalent enzyme-RNA intermediate. The proton acceptor active site deprotonates the incoming PreQ1, allowing a nucleophilic attack on the C1' of the ribose to form the product. After dissociation, two additional enzymatic reactions on the tRNA convert PreQ1 to queuine (Q), resulting in the hypermodified nucleoside queuosine (7-(((4,5-cis-dihydroxy-2-cyclopenten-1-yl)amino)methyl)-7-deazaguanosine). The chain is Queuine tRNA-ribosyltransferase from Chromohalobacter salexigens (strain ATCC BAA-138 / DSM 3043 / CIP 106854 / NCIMB 13768 / 1H11).